Here is a 125-residue protein sequence, read N- to C-terminus: Large ribosomal subunit protein bL17 (125 aa).

Belongs to the bacterial ribosomal protein bL17 family. Part of the 50S ribosomal subunit. Contacts protein L32.

This chain is Large ribosomal subunit protein bL17, found in Blochmanniella pennsylvanica (strain BPEN).